The chain runs to 109 residues: Co-chaperonin GroES (109 aa).

It belongs to the GroES chaperonin family. As to quaternary structure, heptamer of 7 subunits arranged in a ring. Interacts with the chaperonin GroEL.

It localises to the cytoplasm. Its function is as follows. Together with the chaperonin GroEL, plays an essential role in assisting protein folding. The GroEL-GroES system forms a nano-cage that allows encapsulation of the non-native substrate proteins and provides a physical environment optimized to promote and accelerate protein folding. GroES binds to the apical surface of the GroEL ring, thereby capping the opening of the GroEL channel. The polypeptide is Co-chaperonin GroES (Methanosarcina acetivorans (strain ATCC 35395 / DSM 2834 / JCM 12185 / C2A)).